A 450-amino-acid polypeptide reads, in one-letter code: MAPLVTVVSSPRARLFACFLRLGTQQAGPLQLHTGACCTAKNHYEVLVLGGGAGGITMATRMKRRVGAENVAIVEPSERHFYQPIWTLVGAGAKELSLSVRSTLSVIPSGVQWIQDRVAELNPDENCIRTDSGKEISYRYLIIALGIQLDYEKIKGLPEGFAYPKIGSNYSVKTVEKTWKALQGFKEGNALFTFPNTPVKCAGAPQKIMYLSEAYFRKTGKRPKANIIFNTALGTIFGVKKYADALQEIIRERDVSVNYKHNLIEVRPDKQEAVFEILDKPGETHVIPYEMLHVTPPMSAPDVLKRSPVADSAGWVDVDKETLQHKKYPNVFGIGDCTNLPTSKTAAAVAAQSGILDRTMCLIMKNQRPIKKYDGYTSCPLVTGYNRVILAEFDYTAQPLETFPFDQSKERITMYLMKADMMPFLYWNMMLRGYWGGPAFLRKLFHLGMN.

FAD is bound by residues 53–54 (AG), Glu-75, Gln-83, and Val-118. 2 positions are modified to N6-acetyllysine: Lys-134 and Lys-173. Catalysis depends on Cys-201, which acts as the Cysteine persulfide intermediate. Cysteines 201 and 379 form a disulfide. Asp-336 contacts FAD. At Ser-343 the chain carries Phosphoserine. 344–347 (KTAA) is an FAD binding site. The active-site Cysteine persulfide intermediate is Cys-379.

The protein belongs to the SQRD family. The cofactor is FAD.

It localises to the mitochondrion. It carries out the reaction ubiquinone-10 + hydrogen sulfide + sulfite + 2 H(+) = ubiquinol-10 + thiosulfate. It catalyses the reaction a quinone + hydrogen sulfide + glutathione + H(+) = S-sulfanylglutathione + a quinol. The enzyme catalyses ubiquinone-10 + hydrogen sulfide + glutathione + H(+) = S-sulfanylglutathione + ubiquinol-10. Catalyzes the oxidation of hydrogen sulfide with the help of a quinone, such as ubiquinone-10, giving rise to thiosulfate and ultimately to sulfane (molecular sulfur) atoms. Requires an additional electron acceptor; can use sulfite, sulfide or cyanide (in vitro). It is believed the in vivo electron acceptor is glutathione. This Mus musculus (Mouse) protein is Sulfide:quinone oxidoreductase, mitochondrial.